A 165-amino-acid chain; its full sequence is Dihydrofolate reductase (165 aa).

Positions 3–165 (VVGLIWAQST…RYRLHSYHRS (163 aa)) constitute a DHFR domain. Substrate is bound at residue 7–9 (IWA). NADP(+) is bound by residues 8–9 (WA) and 16–21 (IGRDGG). Substrate is bound at residue Asp29. 45 to 48 (GRRT) contributes to the NADP(+) binding site. Residue Arg62 coordinates substrate. NADP(+) is bound by residues 67–70 (LSRQ) and 100–105 (IGGEQI). A substrate-binding site is contributed by Thr119.

This sequence belongs to the dihydrofolate reductase family.

The enzyme catalyses (6S)-5,6,7,8-tetrahydrofolate + NADP(+) = 7,8-dihydrofolate + NADPH + H(+). It participates in cofactor biosynthesis; tetrahydrofolate biosynthesis; 5,6,7,8-tetrahydrofolate from 7,8-dihydrofolate: step 1/1. In terms of biological role, key enzyme in folate metabolism. Catalyzes an essential reaction for de novo glycine and purine synthesis, and for DNA precursor synthesis. The chain is Dihydrofolate reductase (folA) from Mycobacterium leprae (strain TN).